Here is a 352-residue protein sequence, read N- to C-terminus: Histidinol-phosphate aminotransferase (352 aa).

Lys221 carries the N6-(pyridoxal phosphate)lysine modification.

It belongs to the class-II pyridoxal-phosphate-dependent aminotransferase family. Histidinol-phosphate aminotransferase subfamily. In terms of assembly, homodimer. It depends on pyridoxal 5'-phosphate as a cofactor.

The enzyme catalyses L-histidinol phosphate + 2-oxoglutarate = 3-(imidazol-4-yl)-2-oxopropyl phosphate + L-glutamate. It participates in amino-acid biosynthesis; L-histidine biosynthesis; L-histidine from 5-phospho-alpha-D-ribose 1-diphosphate: step 7/9. The sequence is that of Histidinol-phosphate aminotransferase from Staphylococcus aureus (strain Mu3 / ATCC 700698).